The chain runs to 116 residues: Dynein light chain Tctex-type 3 (116 aa).

Residue Tyr4 is modified to 3'-nitrotyrosine.

It belongs to the dynein light chain Tctex-type family. In terms of assembly, homodimer. The cytoplasmic dynein 1 complex consists of two catalytic heavy chains (HCs) and a number of non-catalytic subunits presented by intermediate chains (ICs), light intermediate chains (LICs) and light chains (LCs); the composition seems to vary in respect to the IC, LIC and LC composition. The heavy chain homodimer serves as a scaffold for the probable homodimeric assembly of the respective non-catalytic subunits. The ICs and LICs bind directly to the HC dimer and the LCs assemble on the IC dimer. DYNLT1 and DYNLT3 compete for association with dynein IC (DYNC1I1 or DYNC1I2). Self-associates. Interacts with DYNC1I1 and DYNC1I2. Interacts with BUB3. Interacts with SATB1 in nucleus to form complex with matrix attachment regions (MARs) of DNA.

The protein localises to the nucleus. Its subcellular location is the cytoplasm. It localises to the cytoskeleton. It is found in the chromosome. The protein resides in the centromere. The protein localises to the kinetochore. Its function is as follows. Acts as one of several non-catalytic accessory components of the cytoplasmic dynein 1 complex that are thought to be involved in linking dynein to cargos and to adapter proteins that regulate dynein function. Cytoplasmic dynein 1 acts as a motor for the intracellular retrograde motility of vesicles and organelles along microtubules. Probably binds BUB3 as part of transport cargo. Required for the efficient progression through mitosis. The protein is Dynein light chain Tctex-type 3 (DYNLT3) of Homo sapiens (Human).